Here is a 338-residue protein sequence, read N- to C-terminus: Ketol-acid reductoisomerase (NADP(+)) (338 aa).

The 181-residue stretch at 1 to 181 folds into the KARI N-terminal Rossmann domain; that stretch reads MKVFYDKDAD…GGGRAGIIET (181 aa). Residues 24-27, Arg47, and Ser52 each bind NADP(+); that span reads YGSQ. His107 is a catalytic residue. Residue Gly133 coordinates NADP(+). The region spanning 182–327 is the KARI C-terminal knotted domain; that stretch reads NFREETETDL…AKLRAMMPWI (146 aa). Mg(2+)-binding residues include Asp190, Glu194, Glu226, and Glu230. Substrate is bound at residue Ser251.

It belongs to the ketol-acid reductoisomerase family. It depends on Mg(2+) as a cofactor.

The enzyme catalyses (2R)-2,3-dihydroxy-3-methylbutanoate + NADP(+) = (2S)-2-acetolactate + NADPH + H(+). It catalyses the reaction (2R,3R)-2,3-dihydroxy-3-methylpentanoate + NADP(+) = (S)-2-ethyl-2-hydroxy-3-oxobutanoate + NADPH + H(+). Its pathway is amino-acid biosynthesis; L-isoleucine biosynthesis; L-isoleucine from 2-oxobutanoate: step 2/4. It functions in the pathway amino-acid biosynthesis; L-valine biosynthesis; L-valine from pyruvate: step 2/4. In terms of biological role, involved in the biosynthesis of branched-chain amino acids (BCAA). Catalyzes an alkyl-migration followed by a ketol-acid reduction of (S)-2-acetolactate (S2AL) to yield (R)-2,3-dihydroxy-isovalerate. In the isomerase reaction, S2AL is rearranged via a Mg-dependent methyl migration to produce 3-hydroxy-3-methyl-2-ketobutyrate (HMKB). In the reductase reaction, this 2-ketoacid undergoes a metal-dependent reduction by NADPH to yield (R)-2,3-dihydroxy-isovalerate. In Polynucleobacter necessarius subsp. necessarius (strain STIR1), this protein is Ketol-acid reductoisomerase (NADP(+)).